Reading from the N-terminus, the 62-residue chain is Photosystem II reaction center protein Z (62 aa).

The next 2 helical transmembrane spans lie at 8-28 (TLFA…VVFA) and 41-61 (FSGV…NSFV).

Belongs to the PsbZ family. In terms of assembly, PSII is composed of 1 copy each of membrane proteins PsbA, PsbB, PsbC, PsbD, PsbE, PsbF, PsbH, PsbI, PsbJ, PsbK, PsbL, PsbM, PsbT, PsbY, PsbZ, Psb30/Ycf12, at least 3 peripheral proteins of the oxygen-evolving complex and a large number of cofactors. It forms dimeric complexes.

It localises to the plastid. The protein resides in the chloroplast thylakoid membrane. Functionally, may control the interaction of photosystem II (PSII) cores with the light-harvesting antenna, regulates electron flow through the 2 photosystem reaction centers. PSII is a light-driven water plastoquinone oxidoreductase, using light energy to abstract electrons from H(2)O, generating a proton gradient subsequently used for ATP formation. The chain is Photosystem II reaction center protein Z from Oltmannsiellopsis viridis (Marine flagellate).